The chain runs to 509 residues: Histidine ammonia-lyase (509 aa).

The 5-imidazolinone (Ala-Gly) cross-link spans 142–144 (ASG). 2,3-didehydroalanine (Ser) is present on Ser-143.

It belongs to the PAL/histidase family. In terms of processing, contains an active site 4-methylidene-imidazol-5-one (MIO), which is formed autocatalytically by cyclization and dehydration of residues Ala-Ser-Gly.

Its subcellular location is the cytoplasm. The enzyme catalyses L-histidine = trans-urocanate + NH4(+). It functions in the pathway amino-acid degradation; L-histidine degradation into L-glutamate; N-formimidoyl-L-glutamate from L-histidine: step 1/3. The protein is Histidine ammonia-lyase of Sphingopyxis alaskensis (strain DSM 13593 / LMG 18877 / RB2256) (Sphingomonas alaskensis).